The sequence spans 438 residues: MPKIVVVGAVAGGATCASQIRRLDKESDIIIFEKDRDMSFANCALPYVIGEVVEDRKYALVYTPEKFYDRKQITVKTYHEVIAINDERQTVTVLNRKTNEQFEESYDKLILSPGASANSLGFESDITFTLRNLEDTDAIDQFIKANQVDKVLVIGAGYVSLEVLENLYERGLHPTLIHRSDKINKLMDADMNQPILDELDKREIPYRLNEEIDAINGNEITFKSGKVEHYDMIIEGVGTHPNSKLIESSNIKLDRKGFIPVNDKFETNVPNIYAIGDIATSHYRHVDLPASVPLAWGAHRAASIVAEQIAGNDTIEFKGFLGNNIVKFFDYTFASVGVKPNELKQFDYKMVEVTQGAHANYYPGNSPLHLRVYYDTSNRQILRAAAVGKEGADKRIDVLSMAMMNQLTVDELTEFEVAYAPPYSHPKDLINMIGYKAK.

8 to 33 (GAVAGGATCASQIRRLDKESDIIIFE) contacts FAD. Positions 15, 19, 22, 39, and 42 each coordinate substrate. Cysteine 43 acts as the Nucleophile in catalysis. Catalysis depends on cysteine 43, which acts as the Redox-active. Lysine 71 lines the substrate pocket. Residue 151-166 (VLVIGAGYVSLEVLEN) coordinates NADP(+). An FAD-binding site is contributed by 267-277 (TNVPNIYAIGD). Histidine 299 provides a ligand contact to substrate. Tyrosine 419 contacts FAD. Lysine 427 contributes to the substrate binding site.

Belongs to the class-III pyridine nucleotide-disulfide oxidoreductase family. As to quaternary structure, homodimer. FAD serves as cofactor.

It carries out the reaction NADP(+) + 2 CoA = CoA-disulfide + NADPH + H(+). Catalyzes specifically the NADPH-dependent reduction of coenzyme A disulfide. The sequence is that of Coenzyme A disulfide reductase from Staphylococcus aureus (strain JH1).